A 508-amino-acid polypeptide reads, in one-letter code: Hydroxymethylglutaryl-CoA synthase, mitochondrial (508 aa).

The transit peptide at 1–37 (MQRLLTPVRQVLRVKRAMQEASFMPPLLPPAAHQRFS) directs the protein to the mitochondrion. Lys52 carries the post-translational modification N6-succinyllysine. Residues Glu80 and Ala81 each contribute to the (3S)-3-hydroxy-3-methylglutaryl-CoA site. Glu132 serves as the catalytic Proton donor/acceptor. (3S)-3-hydroxy-3-methylglutaryl-CoA-binding residues include Cys166, Asn204, and Thr208. Cys166 serves as the catalytic Acyl-thioester intermediate. Lys243 is modified (N6-acetyllysine). Position 256 is an N6-acetyllysine; alternate (Lys256). Lys256 carries the N6-succinyllysine; alternate modification. (3S)-3-hydroxy-3-methylglutaryl-CoA-binding residues include Ser258 and His301. Residue His301 is the Proton donor/acceptor of the active site. At Lys306 the chain carries N6-acetyllysine. Position 310 (Lys310) interacts with (3S)-3-hydroxy-3-methylglutaryl-CoA. Residue Lys310 is modified to N6-acetyllysine; alternate. Position 310 is an N6-succinyllysine; alternate (Lys310). Lys333 bears the N6-succinyllysine mark. Residues Lys342, Lys350, Lys354, and Lys358 each carry the N6-acetyllysine; alternate modification. An N6-succinyllysine; alternate mark is found at Lys342, Lys350, Lys354, and Lys358. The (3S)-3-hydroxy-3-methylglutaryl-CoA site is built by Asn380 and Ser414. Ser433 bears the Phosphoserine mark. At Lys437 the chain carries N6-acetyllysine. Ser440 and Ser456 each carry phosphoserine. Lys473 is subject to N6-acetyllysine; alternate. At Lys473 the chain carries N6-succinyllysine; alternate.

It belongs to the thiolase-like superfamily. HMG-CoA synthase family. In terms of assembly, homodimer. In terms of processing, succinylated. Desuccinylated by SIRT5. Succinylation, at least at Lys-310, inhibits the enzymatic activity.

The protein localises to the mitochondrion. The enzyme catalyses acetoacetyl-CoA + acetyl-CoA + H2O = (3S)-3-hydroxy-3-methylglutaryl-CoA + CoA + H(+). It functions in the pathway metabolic intermediate biosynthesis; (R)-mevalonate biosynthesis; (R)-mevalonate from acetyl-CoA: step 2/3. Its function is as follows. Catalyzes the first irreversible step in ketogenesis, condensing acetyl-CoA to acetoacetyl-CoA to form HMG-CoA, which is converted by HMG-CoA reductase (HMGCR) into mevalonate. The polypeptide is Hydroxymethylglutaryl-CoA synthase, mitochondrial (HMGCS2) (Sus scrofa (Pig)).